The following is a 159-amino-acid chain: Nanos homolog 3 (159 aa).

Residues 42 to 87 are disordered; sequence QEMQSDADSDEQAAALLESPSGPIRSRDSPEQNTSPGGGKPKSSPA. Residues 91–145 form a Nanos-type zinc finger; the sequence is FCSFCKHNGETEAVYTSHYLKNRDGDVMCPYLRQYKCPLCGATGAKAHTKRFCPM. 8 residues coordinate Zn(2+): Cys-92, Cys-95, His-108, Cys-119, Cys-127, Cys-130, His-138, and Cys-143. 2 short sequence motifs (C2HC) span residues 92–119 and 127–143; these read CSFC…DVMC and CPLC…KRFC. The segment at 92-159 is interaction with mylpfa; the sequence is CSFCKHNGET…YCSVYAKSTW (68 aa).

It belongs to the nanos family. Interacts (via C-terminus) with myosin mylpfa/mylz2; the interaction negatively regulates mylpfa phosphorylation. In terms of tissue distribution, in the embryo, displays early ubiquitous expression before being restricted to primordial germ cells in a 3'-UTR-dependent manner. Expressed in early stage germ cells in larval and adult ovaries.

The protein localises to the cytoplasm. The protein resides in the perinuclear region. Functionally, RNA-binding protein which binds to RNA with no sequence specificity. Probably represses translation of specific mRNAs. Essential for the development of primordial germ cells (PGCs) by ensuring their proper migration and survival but is not required for PGC specification. Also required to maintain oocyte production in the adult ovary. Negatively regulates phosphorylation of myosin mylpfa/mylz2. In Danio rerio (Zebrafish), this protein is Nanos homolog 3.